The primary structure comprises 181 residues: Inner membrane-spanning protein YciB (181 aa).

A run of 5 helical transmembrane segments spans residues 3 to 23 (FLFD…YGIY), 49 to 69 (TMLW…LILQ), 76 to 96 (WKPS…QAIF), 119 to 139 (VNAS…YVAF), and 149 to 169 (FKLF…GLML).

Belongs to the YciB family.

The protein localises to the cell inner membrane. Plays a role in cell envelope biogenesis, maintenance of cell envelope integrity and membrane homeostasis. This chain is Inner membrane-spanning protein YciB, found in Nitrosospira multiformis (strain ATCC 25196 / NCIMB 11849 / C 71).